We begin with the raw amino-acid sequence, 47 residues long: MAVLKAIKIEDRDGEILFRCPRCGMVFRSAKAYTRHVNKAHGHLFRK.

Residues 18 to 41 (FRCPRCGMVFRSAKAYTRHVNKAH) form a C2H2-type zinc finger. Zn(2+)-binding residues include cysteine 20, cysteine 23, histidine 36, and histidine 41.

As to quaternary structure, crystallized in association with 70S ribosomes. Zn(2+) serves as cofactor.

The polypeptide is Zinc-finger protein TK0143 (Thermococcus kodakarensis (strain ATCC BAA-918 / JCM 12380 / KOD1) (Pyrococcus kodakaraensis (strain KOD1))).